A 260-amino-acid chain; its full sequence is Thiazole synthase (260 aa).

K96 serves as the catalytic Schiff-base intermediate with DXP. Residues G157, 183–184 (AG), and 205–206 (AS) each bind 1-deoxy-D-xylulose 5-phosphate.

This sequence belongs to the ThiG family. As to quaternary structure, homotetramer. Forms heterodimers with either ThiH or ThiS.

It is found in the cytoplasm. It catalyses the reaction [ThiS sulfur-carrier protein]-C-terminal-Gly-aminoethanethioate + 2-iminoacetate + 1-deoxy-D-xylulose 5-phosphate = [ThiS sulfur-carrier protein]-C-terminal Gly-Gly + 2-[(2R,5Z)-2-carboxy-4-methylthiazol-5(2H)-ylidene]ethyl phosphate + 2 H2O + H(+). It participates in cofactor biosynthesis; thiamine diphosphate biosynthesis. Catalyzes the rearrangement of 1-deoxy-D-xylulose 5-phosphate (DXP) to produce the thiazole phosphate moiety of thiamine. Sulfur is provided by the thiocarboxylate moiety of the carrier protein ThiS. In vitro, sulfur can be provided by H(2)S. In Corynebacterium glutamicum (strain ATCC 13032 / DSM 20300 / JCM 1318 / BCRC 11384 / CCUG 27702 / LMG 3730 / NBRC 12168 / NCIMB 10025 / NRRL B-2784 / 534), this protein is Thiazole synthase.